A 388-amino-acid polypeptide reads, in one-letter code: 8-amino-7-oxononanoate synthase (388 aa).

Arg23 is a binding site for substrate. Residue 110–111 (GF) participates in pyridoxal 5'-phosphate binding. His135 is a substrate binding site. Pyridoxal 5'-phosphate contacts are provided by Ser181, His209, and Thr235. Lys238 carries the post-translational modification N6-(pyridoxal phosphate)lysine. Substrate is bound at residue Thr352.

Belongs to the class-II pyridoxal-phosphate-dependent aminotransferase family. BioF subfamily. As to quaternary structure, homodimer. Requires pyridoxal 5'-phosphate as cofactor.

The enzyme catalyses 6-carboxyhexanoyl-[ACP] + L-alanine + H(+) = (8S)-8-amino-7-oxononanoate + holo-[ACP] + CO2. It participates in cofactor biosynthesis; biotin biosynthesis. In terms of biological role, catalyzes the decarboxylative condensation of pimeloyl-[acyl-carrier protein] and L-alanine to produce 8-amino-7-oxononanoate (AON), [acyl-carrier protein], and carbon dioxide. The sequence is that of 8-amino-7-oxononanoate synthase from Sodalis glossinidius (strain morsitans).